The chain runs to 54 residues: Ovomucoid (54 aa).

Positions 4–54 (VDCSGYPQSACPQDYVPFCGSDNKTYSNKCNFCNAVADSNGTLTLSHFGKC) constitute a Kazal-like domain. 3 disulfides stabilise this stretch: Cys-6-Cys-36, Cys-14-Cys-33, and Cys-22-Cys-54. Asn-43 is a glycosylation site (N-linked (GlcNAc...) asparagine).

The protein resides in the secreted. This chain is Ovomucoid, found in Gallirallus australis (Weka).